A 1048-amino-acid polypeptide reads, in one-letter code: Anguibactin system regulator (1048 aa).

A Carrier domain is found at 965-1039 (PIITASEDRV…AFAIIMDRCR (75 aa)).

It belongs to the ATP-dependent AMP-binding enzyme family.

Its pathway is siderophore biosynthesis; anguibactin biosynthesis. In terms of biological role, bifunctional protein that plays an essential role in virulence. Plays a role in both production of the siderophore anguibactin and regulation of iron transport genes. The sequence is that of Anguibactin system regulator (angR) from Vibrio anguillarum (strain ATCC 68554 / 775) (Listonella anguillarum).